Reading from the N-terminus, the 171-residue chain is Regulator of ribonuclease activity A (171 aa).

Belongs to the RraA family. As to quaternary structure, homotrimer. Binds to both RNA-binding sites in the C-terminal region of Rne and to RhlB.

It localises to the cytoplasm. In terms of biological role, globally modulates RNA abundance by binding to RNase E (Rne) and regulating its endonucleolytic activity. Can modulate Rne action in a substrate-dependent manner by altering the composition of the degradosome. Modulates RNA-binding and helicase activities of the degradosome. This is Regulator of ribonuclease activity A from Vibrio cholerae serotype O1 (strain ATCC 39315 / El Tor Inaba N16961).